The primary structure comprises 318 residues: Glutathione synthetase (318 aa).

One can recognise an ATP-grasp domain in the interval Lys-129–Glu-314. Position 155–211 (His-155–Gly-211) interacts with ATP. Mg(2+) contacts are provided by Glu-285 and Asn-287.

Belongs to the prokaryotic GSH synthase family. Requires Mg(2+) as cofactor. The cofactor is Mn(2+).

The catalysed reaction is gamma-L-glutamyl-L-cysteine + glycine + ATP = glutathione + ADP + phosphate + H(+). It participates in sulfur metabolism; glutathione biosynthesis; glutathione from L-cysteine and L-glutamate: step 2/2. The protein is Glutathione synthetase of Bordetella pertussis (strain Tohama I / ATCC BAA-589 / NCTC 13251).